Here is a 374-residue protein sequence, read N- to C-terminus: Outer membrane protein assembly factor BamC (374 aa).

The first 22 residues, 1–22, serve as a signal peptide directing secretion; it reads MSKFYKSGRVTTAVIVALSLSA. A lipid anchor (N-palmitoyl cysteine) is attached at Cys-23. Residue Cys-23 is the site of S-diacylglycerol cysteine attachment.

It belongs to the BamC family. Part of the Bam complex.

It localises to the cell outer membrane. Part of the outer membrane protein assembly complex, which is involved in assembly and insertion of beta-barrel proteins into the outer membrane. This Psychromonas ingrahamii (strain DSM 17664 / CCUG 51855 / 37) protein is Outer membrane protein assembly factor BamC.